Consider the following 558-residue polypeptide: MDAPPLHANLIPAARGTEPADLVLKNAMLFDAFSCSWEEGDLAIKDGIIVGTGRSYRGIRERDLGGALVVPGLIDAHVHIESSLLVPQEYAHLVAAHGTTTVIADPHEIANIAGKEGIEYMLACRAGLPVDILYMLPSCVPATPADVGGAVLDAGDLAGFPGRDGILGLGEMMNVPGVLGGDPGVLAKLVLSRIRDGHAPHLSGPDLNAYLLSGPDSDHECTTASEAKEKLRCGMYLFVREGSTEKNIAALVPVVTPYTVSRCSFCTDDCHADLLAHSGHIDRCIRTAVAGGLEPELALRMATLSPAERFSLPDRGALAPGRRADFCIVDDPRHFAVKETYSRGRPVAEYAAPQARPPVFAALRCTVPSRDQIRLFGTGRARVIGLVPGQILTESLTFDLDAAALPDISRDLLKLVVCNRYGKGSVGTGIVHGFGFKDGAIAASISHDAHNIVAAGTGDEVILSALTAVIRAGGGMAAVHKKDVTVLPLDCAGLMSTHPAREVIAGLDALSAATRRIGGIDDPFMYLSFLALTVIPALRLTDRGLFDAVAFRDVPVFP.

Belongs to the metallo-dependent hydrolases superfamily. Adenine deaminase family. Requires Mn(2+) as cofactor.

It carries out the reaction adenine + H2O + H(+) = hypoxanthine + NH4(+). This is Adenine deaminase from Methanoregula boonei (strain DSM 21154 / JCM 14090 / 6A8).